The sequence spans 316 residues: Beta-ketoacyl-[acyl-carrier-protein] synthase III (316 aa).

Residues Cys112 and His243 contribute to the active site. Positions Gln244–Arg248 are ACP-binding. The active site involves Asn273.

It belongs to the thiolase-like superfamily. FabH family. Homodimer.

It is found in the cytoplasm. It carries out the reaction malonyl-[ACP] + acetyl-CoA + H(+) = 3-oxobutanoyl-[ACP] + CO2 + CoA. It participates in lipid metabolism; fatty acid biosynthesis. Functionally, catalyzes the condensation reaction of fatty acid synthesis by the addition to an acyl acceptor of two carbons from malonyl-ACP. Catalyzes the first condensation reaction which initiates fatty acid synthesis and may therefore play a role in governing the total rate of fatty acid production. Possesses both acetoacetyl-ACP synthase and acetyl transacylase activities. Its substrate specificity determines the biosynthesis of branched-chain and/or straight-chain of fatty acids. This is Beta-ketoacyl-[acyl-carrier-protein] synthase III from Actinobacillus pleuropneumoniae serotype 5b (strain L20).